A 382-amino-acid chain; its full sequence is Alkanesulfonate monooxygenase (382 aa).

It belongs to the SsuD family.

It catalyses the reaction an alkanesulfonate + FMNH2 + O2 = an aldehyde + FMN + sulfite + H2O + 2 H(+). Functionally, catalyzes the desulfonation of aliphatic sulfonates. The sequence is that of Alkanesulfonate monooxygenase from Ectopseudomonas mendocina (strain ymp) (Pseudomonas mendocina).